The sequence spans 251 residues: MKITAIIPARYASTRFEGKALADIMGKPMVQHVYERTAKASLVSEVIVATDDERIAAAVHAFGGRAEMTSRVHETGTDRLAEVAARLDSDIIVNVQGDEPLIEPAMIDEAIKPLAEDSSVMMGTLKTRIKTLHDFLSPNVVKVVTDWEGYALYFSRSPLPNFRDKWNDLKDEAFASRKLLCYKHVGLYVYRRDFLLQFAQMSPTYLEMAEKLEQLRVLENGYRIKVVETDYESIGVDTPGDLEKVLERLKK.

This sequence belongs to the KdsB family.

It localises to the cytoplasm. It catalyses the reaction 3-deoxy-alpha-D-manno-oct-2-ulosonate + CTP = CMP-3-deoxy-beta-D-manno-octulosonate + diphosphate. The protein operates within nucleotide-sugar biosynthesis; CMP-3-deoxy-D-manno-octulosonate biosynthesis; CMP-3-deoxy-D-manno-octulosonate from 3-deoxy-D-manno-octulosonate and CTP: step 1/1. Its pathway is bacterial outer membrane biogenesis; lipopolysaccharide biosynthesis. Its function is as follows. Activates KDO (a required 8-carbon sugar) for incorporation into bacterial lipopolysaccharide in Gram-negative bacteria. This Geotalea uraniireducens (strain Rf4) (Geobacter uraniireducens) protein is 3-deoxy-manno-octulosonate cytidylyltransferase.